The sequence spans 245 residues: 1-(5-phosphoribosyl)-5-[(5-phosphoribosylamino)methylideneamino] imidazole-4-carboxamide isomerase (245 aa).

The Proton acceptor role is filled by D7. The active-site Proton donor is D129.

The protein belongs to the HisA/HisF family.

The protein localises to the cytoplasm. The catalysed reaction is 1-(5-phospho-beta-D-ribosyl)-5-[(5-phospho-beta-D-ribosylamino)methylideneamino]imidazole-4-carboxamide = 5-[(5-phospho-1-deoxy-D-ribulos-1-ylimino)methylamino]-1-(5-phospho-beta-D-ribosyl)imidazole-4-carboxamide. The protein operates within amino-acid biosynthesis; L-histidine biosynthesis; L-histidine from 5-phospho-alpha-D-ribose 1-diphosphate: step 4/9. The polypeptide is 1-(5-phosphoribosyl)-5-[(5-phosphoribosylamino)methylideneamino] imidazole-4-carboxamide isomerase (Aliivibrio fischeri (strain ATCC 700601 / ES114) (Vibrio fischeri)).